A 188-amino-acid polypeptide reads, in one-letter code: MAIRRILRIDDAEDRKILKMQCRPVKLPDRNLKQLVADMFETMRAAHGVGLAAPQIGIPIQLCIIEIPAEYEERADGSVVEVAPAEPYVLINPRIVKMSGEEVMRDEGCLSLPGWYGMVPRQTWVTVEFQDLNGKHHRLRRAGDLLGWAIQHEVDHLNGILFTERIRDLSTLRDITKERDAQPVDQAP.

The Fe cation site is built by cysteine 109 and histidine 152. The active site involves glutamate 153. Histidine 156 is a Fe cation binding site.

The protein belongs to the polypeptide deformylase family. It depends on Fe(2+) as a cofactor.

The catalysed reaction is N-terminal N-formyl-L-methionyl-[peptide] + H2O = N-terminal L-methionyl-[peptide] + formate. Its function is as follows. Removes the formyl group from the N-terminal Met of newly synthesized proteins. Requires at least a dipeptide for an efficient rate of reaction. N-terminal L-methionine is a prerequisite for activity but the enzyme has broad specificity at other positions. This chain is Peptide deformylase, found in Chloroflexus aurantiacus (strain ATCC 29366 / DSM 635 / J-10-fl).